Reading from the N-terminus, the 85-residue chain is Exodeoxyribonuclease 7 small subunit (85 aa).

The tract at residues 66–85 is disordered; sequence SGEGEEVPLDTPDAEDGDGE. The segment covering 68-85 has biased composition (acidic residues); the sequence is EGEEVPLDTPDAEDGDGE.

The protein belongs to the XseB family. Heterooligomer composed of large and small subunits.

It localises to the cytoplasm. It catalyses the reaction Exonucleolytic cleavage in either 5'- to 3'- or 3'- to 5'-direction to yield nucleoside 5'-phosphates.. Functionally, bidirectionally degrades single-stranded DNA into large acid-insoluble oligonucleotides, which are then degraded further into small acid-soluble oligonucleotides. This is Exodeoxyribonuclease 7 small subunit from Thioalkalivibrio sulfidiphilus (strain HL-EbGR7).